A 330-amino-acid polypeptide reads, in one-letter code: 4-hydroxythreonine-4-phosphate dehydrogenase (330 aa).

Residues histidine 134 and threonine 135 each contribute to the substrate site. Positions 164, 209, and 264 each coordinate a divalent metal cation. Substrate contacts are provided by lysine 272, asparagine 281, and arginine 290.

This sequence belongs to the PdxA family. Homodimer. Zn(2+) is required as a cofactor. It depends on Mg(2+) as a cofactor. Co(2+) serves as cofactor.

It localises to the cytoplasm. It carries out the reaction 4-(phosphooxy)-L-threonine + NAD(+) = 3-amino-2-oxopropyl phosphate + CO2 + NADH. It functions in the pathway cofactor biosynthesis; pyridoxine 5'-phosphate biosynthesis; pyridoxine 5'-phosphate from D-erythrose 4-phosphate: step 4/5. Its function is as follows. Catalyzes the NAD(P)-dependent oxidation of 4-(phosphooxy)-L-threonine (HTP) into 2-amino-3-oxo-4-(phosphooxy)butyric acid which spontaneously decarboxylates to form 3-amino-2-oxopropyl phosphate (AHAP). This chain is 4-hydroxythreonine-4-phosphate dehydrogenase, found in Pseudoalteromonas translucida (strain TAC 125).